Here is a 563-residue protein sequence, read N- to C-terminus: Sulfite reductase [NADPH] hemoprotein beta-component (563 aa).

The [4Fe-4S] cluster site is built by C427, C433, C472, and C476. C476 serves as a coordination point for siroheme.

It belongs to the nitrite and sulfite reductase 4Fe-4S domain family. As to quaternary structure, alpha(8)-beta(8). The alpha component is a flavoprotein, the beta component is a hemoprotein. Siroheme is required as a cofactor. It depends on [4Fe-4S] cluster as a cofactor.

It carries out the reaction hydrogen sulfide + 3 NADP(+) + 3 H2O = sulfite + 3 NADPH + 4 H(+). Its pathway is sulfur metabolism; hydrogen sulfide biosynthesis; hydrogen sulfide from sulfite (NADPH route): step 1/1. Component of the sulfite reductase complex that catalyzes the 6-electron reduction of sulfite to sulfide. This is one of several activities required for the biosynthesis of L-cysteine from sulfate. In Acidithiobacillus ferrooxidans (strain ATCC 53993 / BNL-5-31) (Leptospirillum ferrooxidans (ATCC 53993)), this protein is Sulfite reductase [NADPH] hemoprotein beta-component.